The sequence spans 402 residues: Propionate kinase (402 aa).

2 residues coordinate ATP: N11 and K18. A Mg(2+)-binding site is contributed by N11. Residue R86 coordinates substrate. The active-site Proton donor/acceptor is D143. ATP contacts are provided by residues H175, 203–207, 278–280, and 326–330; these read HLGNG, DLR, and GIGEN.

The protein belongs to the acetokinase family. TdcD subfamily. Homodimer. Mg(2+) is required as a cofactor.

It carries out the reaction propanoate + ATP = propanoyl phosphate + ADP. It functions in the pathway amino-acid degradation; L-threonine degradation via propanoate pathway; propanoate from L-threonine: step 4/4. Functionally, catalyzes the conversion of propionyl phosphate and ADP to propionate and ATP. This Salmonella agona (strain SL483) protein is Propionate kinase.